The sequence spans 455 residues: Venom prothrombin activator nigrarin-D (455 aa).

Positions 1 to 20 (MAPPLLLCLILTFLWNLPEA) are cleaved as a signal peptide. The propeptide occupies 21–40 (ESNVFLKSKVANRFLQRTKR). Residues 41–86 (SNSIFEEFKAGNIERECIEEKCSKEEAREVFEDNEKTETFWNVYVD) enclose the Gla domain. A 4-carboxyglutamate mark is found at E46, E47, E54, E56, E59, E60, E65, E66, E69, E72, and E75. A disulfide bridge links C57 with C62. The EGF-like 1; calcium-binding domain occupies 86-122 (DGDQCSSNPCHYRGTCKDGIGSYTCTCLPNYEGKNCE). Intrachain disulfides connect C90/C101, C95/C110, C112/C121, C129/C140, C136/C149, C151/C164, C172/C328, C216/C221, C236/C252, C376/C390, and C401/C429. O-linked (Hex...) serine glycosylation occurs at S92. Positions 129–164 (CRVFNGNCWHFCKSVQNEIQCSCAESYRLGDDGHSC) constitute an EGF-like 2 domain. A propeptide spans 182–209 (REASLPDFVQSQKAILLKKSDNPSPDIR) (activation peptide). The Peptidase S1 domain maps to 210 to 453 (IINGMDCKLG…FIPWIKAIMS (244 aa)). H251 serves as the catalytic Charge relay system. An N-linked (GlcNAc...) asparagine glycan is attached at N254. Residue D308 is the Charge relay system of the active site. The active-site Charge relay system is the S405.

The protein belongs to the peptidase S1 family. Snake venom subfamily. Heterodimer of a light chain and a heavy chain; disulfide-linked. The vitamin K-dependent, enzymatic carboxylation of some glutamate residues allows the modified protein to bind calcium. Expressed by the venom gland.

Its subcellular location is the secreted. The catalysed reaction is Selective cleavage of Arg-|-Thr and then Arg-|-Ile bonds in prothrombin to form thrombin.. Its function is as follows. Snake prothrombin activator that attacks the hemostatic system of prey. This protein is functionally similar to blood coagulation factor Xa. This Cryptophis nigrescens (Eastern small-eyed snake) protein is Venom prothrombin activator nigrarin-D.